The chain runs to 1177 residues: Phospholipid-transporting ATPase IF (1177 aa).

The Cytoplasmic portion of the chain corresponds to 1 to 55 (MWRWIRQQLGFDPPHQSDTRTIYVANRFPQNGLYTPQKFIDNRIISSKYTVWNFV). A helical transmembrane segment spans residues 56–77 (PKNLFEQFRRVANFYFLIIFLV). Residues 78 to 82 (QLMID) lie on the Extracellular side of the membrane. Residues 83–104 (TPTSPVTSGLPLFFVITVTAIK) traverse the membrane as a helical segment. Residues 105–289 (QGYEDWLRHN…SAVEKSMNTF (185 aa)) lie on the Cytoplasmic side of the membrane. Residues 290 to 311 (LIIYLVILISEAVISTILKYTW) traverse the membrane as a helical segment. The Extracellular segment spans residues 312 to 341 (QAEEKWDEPWYNQKTEHQRNSSKILRFISD). The chain crosses the membrane as a helical span at residues 342-359 (FLAFLVLYNFIIPISLYV). At 360–876 (TVEMQKFLGS…HGHFYYIRIA (517 aa)) the chain is on the cytoplasmic side. The active-site 4-aspartylphosphate intermediate is aspartate 407. 12 residues coordinate ATP: aspartate 407, lysine 408, threonine 409, glutamate 531, phenylalanine 572, lysine 595, arginine 626, threonine 706, glycine 707, aspartate 708, arginine 794, and lysine 800. Aspartate 407 contacts Mg(2+). Threonine 409 provides a ligand contact to Mg(2+). Aspartate 821 contacts Mg(2+). ATP contacts are provided by asparagine 824 and aspartate 825. Aspartate 825 is a Mg(2+) binding site. The chain crosses the membrane as a helical span at residues 877–898 (TLVQYFFYKNVCFITPQFLYQF). The Extracellular portion of the chain corresponds to 899-910 (YCLFSQQTLYDS). Residues 911 to 930 (VYLTLYNICFTSLPILIYSL) form a helical membrane-spanning segment. Topologically, residues 931–960 (LEQHVDPHVLQNKPTLYRDISKNRLLSIKT) are cytoplasmic. A helical transmembrane segment spans residues 961-982 (FLYWTILGFSHAFIFFFGSYLL). The Extracellular portion of the chain corresponds to 983-997 (IGKDTSLLGNGQMFG). A helical transmembrane segment spans residues 998-1020 (NWTFGTLVFTVMVITVTVKMALE). The Cytoplasmic segment spans residues 1021–1025 (THFWT). The chain crosses the membrane as a helical span at residues 1026–1047 (WINHLVTWGSIIFYFVFSLFYG). The Extracellular portion of the chain corresponds to 1048 to 1065 (GILWPFLGSQNMYFVFIQ). Residues 1066 to 1090 (LLSSGSAWFAIILMVVTCLFLDIIK) form a helical membrane-spanning segment. Topologically, residues 1091 to 1177 (KVFDRHLHPT…TLSTMDSSTC (87 aa)) are cytoplasmic. Serine 1154 bears the Phosphoserine mark.

This sequence belongs to the cation transport ATPase (P-type) (TC 3.A.3) family. Type IV subfamily. Component of a P4-ATPase flippase complex which consists of a catalytic alpha subunit ATP11B and an accessory beta subunit TMEM30A. It depends on Mg(2+) as a cofactor.

The protein localises to the recycling endosome membrane. The protein resides in the early endosome. It localises to the endoplasmic reticulum. Its subcellular location is the golgi apparatus. It is found in the trans-Golgi network. It catalyses the reaction ATP + H2O + phospholipidSide 1 = ADP + phosphate + phospholipidSide 2.. The enzyme catalyses a 1,2-diacyl-sn-glycero-3-phospho-L-serine(out) + ATP + H2O = a 1,2-diacyl-sn-glycero-3-phospho-L-serine(in) + ADP + phosphate + H(+). It carries out the reaction a 1,2-diacyl-sn-glycero-3-phosphoethanolamine(out) + ATP + H2O = a 1,2-diacyl-sn-glycero-3-phosphoethanolamine(in) + ADP + phosphate + H(+). Its activity is regulated as follows. The ATPase activity is up-regulated by aminophospholipids PS and PE. Functionally, catalytic component of a P4-ATPase flippase complex which catalyzes the hydrolysis of ATP coupled to the transport of aminophospholipids, phosphatidylserines (PS) and phosphatidylethanolamines (PE), from the outer to the inner leaflet of intracellular membranes. May contribute to the maintenance of membrane lipid asymmetry in endosome compartment. This Homo sapiens (Human) protein is Phospholipid-transporting ATPase IF (ATP11B).